Consider the following 297-residue polypeptide: HTH-type transcriptional regulator ArgP (297 aa).

The HTH lysR-type domain occupies 4–60; the sequence is PDYRTLQALDAVIRERGFERAAQKLCITQSAVSQRIKQLENMFGQPLLVRTVPPRPT. Positions 21–40 form a DNA-binding region, H-T-H motif; sequence FERAAQKLCITQSAVSQRIK.

This sequence belongs to the LysR transcriptional regulatory family. As to quaternary structure, homodimer.

Its function is as follows. Controls the transcription of genes involved in arginine and lysine metabolism. The sequence is that of HTH-type transcriptional regulator ArgP from Enterobacter sp. (strain 638).